The sequence spans 61 residues: Protein transport protein Sec61 subunit beta (61 aa).

The Cytoplasmic portion of the chain corresponds to 1-35 (MKRPSTQRAPATVNKGGNSMMKFYSEDAIGLKVGP). The helical transmembrane segment at 36–56 (TAVLFMSLIFIAFVIILHIMG) threads the bilayer. The Extracellular segment spans residues 57–61 (KYTRS).

It belongs to the SEC61-beta family. As to quaternary structure, the SEC61 channel-forming translocon complex.

Its subcellular location is the endoplasmic reticulum membrane. Its function is as follows. Component of SEC61 channel-forming translocon complex that mediates transport of signal peptide-containing precursor polypeptides across the endoplasmic reticulum (ER). Forms a ribosome receptor and a gated pore in the ER membrane, both functions required for cotranslational translocation of nascent polypeptides. The sequence is that of Protein transport protein Sec61 subunit beta (sec61b) from Dictyostelium discoideum (Social amoeba).